A 335-amino-acid polypeptide reads, in one-letter code: Homeobox protein DBX1 (335 aa).

2 disordered regions span residues 56–102 (RSIP…LSPA) and 240–335 (KERE…ITVS). Residues 83 to 95 (GSPGSGSRRGSSP) show a composition bias toward low complexity. The segment at residues 181–240 (GMLRRAVFSDVQRKALEKTFQKQKYISKPDRKKLASKLGLKDSQVKIWFQNRRMKWRNSK) is a DNA-binding region (homeobox). Residues 299-317 (GPLPASPAHSSSPGKPSDF) show a composition bias toward low complexity. Residues 318–335 (SDSDEDEEGEEDEEITVS) are compositionally biased toward acidic residues.

It belongs to the H2.0 homeobox family.

Its subcellular location is the nucleus. In terms of biological role, could have a role in patterning the central nervous system during embryogenesis. Has a key role in regulating the distinct phenotypic features that distinguish two major classes of ventral interneurons, V0 and V1 neurons. Regulates the transcription factor profile, neurotransmitter phenotype, intraspinal migratory path and axonal trajectory of V0 neurons, features that differentiate them from an adjacent set of V1 neurons. This is Homeobox protein DBX1 (Dbx1) from Rattus norvegicus (Rat).